A 600-amino-acid chain; its full sequence is DNA primase (600 aa).

The CHC2-type zinc finger occupies 38 to 62 (CPFHDEKTPSFIVYPTRGHYHCYGC). A Toprim domain is found at 253–333 (KRVILVEGQA…GIAVIVCRLP (81 aa)). Mg(2+) contacts are provided by glutamate 259, aspartate 304, and aspartate 306.

It belongs to the DnaG primase family. In terms of assembly, monomer. Interacts with DnaB. Zn(2+) is required as a cofactor. Requires Mg(2+) as cofactor.

The catalysed reaction is ssDNA + n NTP = ssDNA/pppN(pN)n-1 hybrid + (n-1) diphosphate.. In terms of biological role, RNA polymerase that catalyzes the synthesis of short RNA molecules used as primers for DNA polymerase during DNA replication. This Chlamydia muridarum (strain MoPn / Nigg) protein is DNA primase.